Here is an 870-residue protein sequence, read N- to C-terminus: Leucine--tRNA ligase (870 aa).

Residues 43–53 (PYPSGRIHMGH) carry the 'HIGH' region motif. Residues 630-634 (KMSKS) carry the 'KMSKS' region motif. ATP is bound at residue Lys-633.

This sequence belongs to the class-I aminoacyl-tRNA synthetase family.

It localises to the cytoplasm. It catalyses the reaction tRNA(Leu) + L-leucine + ATP = L-leucyl-tRNA(Leu) + AMP + diphosphate. This chain is Leucine--tRNA ligase, found in Parvibaculum lavamentivorans (strain DS-1 / DSM 13023 / NCIMB 13966).